Here is a 113-residue protein sequence, read N- to C-terminus: UPF0482 protein YnfB (113 aa).

The first 28 residues, methionine 1–alanine 28, serve as a signal peptide directing secretion.

It belongs to the UPF0482 family.

The polypeptide is UPF0482 protein YnfB (Escherichia fergusonii (strain ATCC 35469 / DSM 13698 / CCUG 18766 / IAM 14443 / JCM 21226 / LMG 7866 / NBRC 102419 / NCTC 12128 / CDC 0568-73)).